The chain runs to 473 residues: PEP-dependent dihydroxyacetone kinase, phosphoryl donor subunit DhaM (473 aa).

Positions 1–137 (MVNLVIVSHS…LAAKQAQLGI (137 aa)) constitute a PTS EIIA type-4 domain. Catalysis depends on His9, which acts as the Tele-phosphohistidine intermediate. Residues 155-242 (ARSVTVTIRN…SLAAEDFGEH (88 aa)) form the HPr domain. The active-site Pros-phosphohistidine intermediate is His169. The PTS EI-like, N-terminal part stretch occupies residues 266-472 (PLPLAQPARH…IDPAAQRVSC (207 aa)). The active-site Tele-phosphohistidine intermediate is the His432.

This sequence belongs to the PEP-utilizing enzyme family. In terms of assembly, homodimer. The dihydroxyacetone kinase complex is composed of a homodimer of DhaM, a homodimer of DhaK and the subunit DhaL.

The catalysed reaction is dihydroxyacetone + phosphoenolpyruvate = dihydroxyacetone phosphate + pyruvate. Component of the dihydroxyacetone kinase complex, which is responsible for the phosphoenolpyruvate (PEP)-dependent phosphorylation of dihydroxyacetone. DhaM serves as the phosphoryl donor. Is phosphorylated by phosphoenolpyruvate in an EI- and HPr-dependent reaction, and a phosphorelay system on histidine residues finally leads to phosphoryl transfer to DhaL and dihydroxyacetone. The polypeptide is PEP-dependent dihydroxyacetone kinase, phosphoryl donor subunit DhaM (Pantoea ananatis (strain LMG 20103)).